We begin with the raw amino-acid sequence, 174 residues long: ATP synthase subunit b, organellar chromatophore (174 aa).

A helical membrane pass occupies residues 26 to 46 (LINLIIVIGVLFTFLRGFLGE).

Belongs to the ATPase B chain family. In terms of assembly, F-type ATPases have 2 components, F(1) - the catalytic core - and F(0) - the membrane proton channel. F(1) has five subunits: alpha(3), beta(3), gamma(1), delta(1), epsilon(1). F(0) has four main subunits: a(1), b(1), b'(1) and c(10-14). The alpha and beta chains form an alternating ring which encloses part of the gamma chain. F(1) is attached to F(0) by a central stalk formed by the gamma and epsilon chains, while a peripheral stalk is formed by the delta, b and b' chains.

The protein localises to the plastid. The protein resides in the organellar chromatophore thylakoid membrane. Functionally, f(1)F(0) ATP synthase produces ATP from ADP in the presence of a proton or sodium gradient. F-type ATPases consist of two structural domains, F(1) containing the extramembraneous catalytic core and F(0) containing the membrane proton channel, linked together by a central stalk and a peripheral stalk. During catalysis, ATP synthesis in the catalytic domain of F(1) is coupled via a rotary mechanism of the central stalk subunits to proton translocation. Its function is as follows. Component of the F(0) channel, it forms part of the peripheral stalk, linking F(1) to F(0). The polypeptide is ATP synthase subunit b, organellar chromatophore (Paulinella chromatophora).